We begin with the raw amino-acid sequence, 336 residues long: Quinolinate synthase (336 aa).

Histidine 25 and serine 42 together coordinate iminosuccinate. Residue cysteine 86 participates in [4Fe-4S] cluster binding. Iminosuccinate is bound by residues 117–119 (YIN) and serine 138. A [4Fe-4S] cluster-binding site is contributed by cysteine 198. Iminosuccinate is bound by residues 224 to 226 (HPE) and threonine 241. Cysteine 288 is a binding site for [4Fe-4S] cluster.

It belongs to the quinolinate synthase family. Type 3 subfamily. It depends on [4Fe-4S] cluster as a cofactor.

The protein resides in the cytoplasm. It carries out the reaction iminosuccinate + dihydroxyacetone phosphate = quinolinate + phosphate + 2 H2O + H(+). The protein operates within cofactor biosynthesis; NAD(+) biosynthesis; quinolinate from iminoaspartate: step 1/1. In terms of biological role, catalyzes the condensation of iminoaspartate with dihydroxyacetone phosphate to form quinolinate. The polypeptide is Quinolinate synthase (Helicobacter pylori (strain HPAG1)).